The sequence spans 237 residues: Dynein axonemal assembly factor 19 (237 aa).

Residues 8-33 adopt a coiled-coil conformation; it reads NFKALEKELQAALAADEKYKRENAAK.

This sequence belongs to the DNAAF19/PR46b family. In terms of assembly, homodimer.

It localises to the cytoplasm. It is found in the cell projection. Its subcellular location is the cilium. The protein localises to the flagellum. Dynein-attachment factor required for cilia motility. The sequence is that of Dynein axonemal assembly factor 19 (Dnaaf19) from Mus musculus (Mouse).